Consider the following 705-residue polypeptide: Elongation factor G (705 aa).

One can recognise a tr-type G domain in the interval 8–290 (AYYRNIGISA…AVIEYLPAPT (283 aa)). Residues 17 to 24 (AHIDAGKT), 88 to 92 (DTPGH), and 142 to 145 (NKMD) each bind GTP.

Belongs to the TRAFAC class translation factor GTPase superfamily. Classic translation factor GTPase family. EF-G/EF-2 subfamily.

It is found in the cytoplasm. Its function is as follows. Catalyzes the GTP-dependent ribosomal translocation step during translation elongation. During this step, the ribosome changes from the pre-translocational (PRE) to the post-translocational (POST) state as the newly formed A-site-bound peptidyl-tRNA and P-site-bound deacylated tRNA move to the P and E sites, respectively. Catalyzes the coordinated movement of the two tRNA molecules, the mRNA and conformational changes in the ribosome. This is Elongation factor G from Baumannia cicadellinicola subsp. Homalodisca coagulata.